The following is a 476-amino-acid chain: Glutamate mutase epsilon subunit (476 aa).

An L-glutamate-binding site is contributed by arginine 62. Residue glycine 64 participates in adenosylcob(III)alamin binding. Arginine 96 is an L-glutamate binding site. Asparagine 119 serves as a coordination point for adenosylcob(III)alamin. Residues 145–146, glutamate 167, and tyrosine 173 each bind L-glutamate; that span reads RH. Proline 176 provides a ligand contact to adenosylcob(III)alamin. Position 177 (tyrosine 177) interacts with L-glutamate. Residues phenylalanine 289, lysine 318, and glutamate 322 each contribute to the adenosylcob(III)alamin site.

Belongs to the methylaspartate mutase GlmE subunit family. In terms of assembly, heterotetramer composed of 2 epsilon subunits (GlmE) and 2 sigma subunits (GlmS). GlmE exists as a homodimer and GlmS as a monomer. Requires adenosylcob(III)alamin as cofactor.

It carries out the reaction (2S,3S)-3-methyl-L-aspartate = L-glutamate. It participates in amino-acid degradation; L-glutamate degradation via mesaconate pathway; acetate and pyruvate from L-glutamate: step 1/4. Its function is as follows. Catalyzes the carbon skeleton rearrangement of L-glutamate to L-threo-3-methylaspartate ((2S,3S)-3-methylaspartate). This is Glutamate mutase epsilon subunit from Halobacterium salinarum (strain ATCC 700922 / JCM 11081 / NRC-1) (Halobacterium halobium).